The following is a 471-amino-acid chain: 3-isopropylmalate dehydratase large subunit (471 aa).

Cysteine 347, cysteine 407, and cysteine 410 together coordinate [4Fe-4S] cluster.

Belongs to the aconitase/IPM isomerase family. LeuC type 1 subfamily. As to quaternary structure, heterodimer of LeuC and LeuD. It depends on [4Fe-4S] cluster as a cofactor.

It carries out the reaction (2R,3S)-3-isopropylmalate = (2S)-2-isopropylmalate. It functions in the pathway amino-acid biosynthesis; L-leucine biosynthesis; L-leucine from 3-methyl-2-oxobutanoate: step 2/4. Catalyzes the isomerization between 2-isopropylmalate and 3-isopropylmalate, via the formation of 2-isopropylmaleate. This chain is 3-isopropylmalate dehydratase large subunit, found in Buchnera aphidicola subsp. Baizongia pistaciae (strain Bp).